Here is a 268-residue protein sequence, read N- to C-terminus: Esterase PIR7B (268 aa).

The active-site Acyl-ester intermediate is serine 86. Active-site charge relay system residues include aspartate 218 and histidine 246.

This sequence belongs to the AB hydrolase superfamily.

Its function is as follows. Exhibits esterase activity towards naphthol AS-acetate in vitro. This chain is Esterase PIR7B (PIR7B), found in Oryza sativa subsp. japonica (Rice).